The following is a 297-amino-acid chain: Phosphoribosylaminoimidazole-succinocarboxamide synthase (297 aa).

Belongs to the SAICAR synthetase family.

The enzyme catalyses 5-amino-1-(5-phospho-D-ribosyl)imidazole-4-carboxylate + L-aspartate + ATP = (2S)-2-[5-amino-1-(5-phospho-beta-D-ribosyl)imidazole-4-carboxamido]succinate + ADP + phosphate + 2 H(+). It functions in the pathway purine metabolism; IMP biosynthesis via de novo pathway; 5-amino-1-(5-phospho-D-ribosyl)imidazole-4-carboxamide from 5-amino-1-(5-phospho-D-ribosyl)imidazole-4-carboxylate: step 1/2. The protein is Phosphoribosylaminoimidazole-succinocarboxamide synthase of Corynebacterium glutamicum (strain ATCC 13032 / DSM 20300 / JCM 1318 / BCRC 11384 / CCUG 27702 / LMG 3730 / NBRC 12168 / NCIMB 10025 / NRRL B-2784 / 534).